Reading from the N-terminus, the 329-residue chain is MPAQGPSHGELPPADAGRESSPYLELDRSAWAALASEVENPLSAEEIRRLRGLGDQLDLDEVQQIYLPVSRLLSLYVESAGRLYRAQEEFLHQDQPPRTPFVIGLAGSVAVGKSTTARVLQEMLAHWPQHPNVALVTTDGFLYPNAELERRGLLERKGFPESYDRRALLKFVVDIKSGKDEVLAPTYSHLVYDVVPDEKVVIRRPDIVIVEGLNVLQPARVRDDGRTGLTLSDFFDFSVYVDAKTSTIRDWYVSRFLRLRETAFQDTGSYFAKYATLSIEEAMAEAERIWDTINGPNLAQNVLPTRSRATLVLRKDRDHSVRYVRLRKL.

Residues 1-22 are disordered; that stretch reads MPAQGPSHGELPPADAGRESSP. 107 to 114 is an ATP binding site; the sequence is GSVAVGKS.

This sequence belongs to the prokaryotic pantothenate kinase family.

It is found in the cytoplasm. It catalyses the reaction (R)-pantothenate + ATP = (R)-4'-phosphopantothenate + ADP + H(+). The protein operates within cofactor biosynthesis; coenzyme A biosynthesis; CoA from (R)-pantothenate: step 1/5. The sequence is that of Pantothenate kinase from Nocardioides sp. (strain ATCC BAA-499 / JS614).